The following is a 280-amino-acid chain: MDAVKHPVSSLAPHRLGKGFYFMVNSKQIIKKFYNKSFLECSATQETSTTPHDRDNMDQAKLCSLVFEIFKKQTRLLAHLVLEEAIDLNNDLLFAVIYFNDEAILNSLVRHLYKYKPYYCDFTVRAQELDLVVHLDLGHCIDRLKSFIDPDTACFVLCSNLSQLTGLNCLKRVLKHKIIQKSYHLYLLLKTSHKVQQQWPDPVHVVEKYVTKRMVSYALTDNNPLLLAIVLDRLLVKLPTDDFAPLIVGIIESNRFKVECLPTLLQYHNRVKTTTKPIRI.

This is an uncharacterized protein from Aedes vexans (Inland floodwater mosquito).